Reading from the N-terminus, the 152-residue chain is Deoxyuridine 5'-triphosphate nucleotidohydrolase (152 aa).

Substrate contacts are provided by residues 71–73 (RSG), Asn-84, 88–90 (LID), and Met-98.

The protein belongs to the dUTPase family. Mg(2+) is required as a cofactor.

It catalyses the reaction dUTP + H2O = dUMP + diphosphate + H(+). It functions in the pathway pyrimidine metabolism; dUMP biosynthesis; dUMP from dCTP (dUTP route): step 2/2. This enzyme is involved in nucleotide metabolism: it produces dUMP, the immediate precursor of thymidine nucleotides and it decreases the intracellular concentration of dUTP so that uracil cannot be incorporated into DNA. The sequence is that of Deoxyuridine 5'-triphosphate nucleotidohydrolase from Shewanella denitrificans (strain OS217 / ATCC BAA-1090 / DSM 15013).